The following is a 56-amino-acid chain: Arcadin-3 (56 aa).

It is found in the cytoplasm. The protein resides in the cytoskeleton. Part of an actin-like archaeal cytoskeleton. The sequence is that of Arcadin-3 from Pyrobaculum calidifontis (strain DSM 21063 / JCM 11548 / VA1).